Reading from the N-terminus, the 408-residue chain is D-inositol 3-phosphate glycosyltransferase (408 aa).

Residue H7 coordinates 1D-myo-inositol 3-phosphate. UDP-N-acetyl-alpha-D-glucosamine-binding positions include 13-14 (QP) and G21. Residues 18–23 (DAGGMN), K76, Y109, T133, and R153 contribute to the 1D-myo-inositol 3-phosphate site. UDP-N-acetyl-alpha-D-glucosamine is bound by residues R227, K232, and V288. Residues F297, R298, and A300 each coordinate Mg(2+). UDP-N-acetyl-alpha-D-glucosamine-binding residues include E310 and E318. T324 is a binding site for Mg(2+).

Belongs to the glycosyltransferase group 1 family. MshA subfamily. Homodimer.

The catalysed reaction is 1D-myo-inositol 3-phosphate + UDP-N-acetyl-alpha-D-glucosamine = 1D-myo-inositol 2-acetamido-2-deoxy-alpha-D-glucopyranoside 3-phosphate + UDP + H(+). Catalyzes the transfer of a N-acetyl-glucosamine moiety to 1D-myo-inositol 3-phosphate to produce 1D-myo-inositol 2-acetamido-2-deoxy-glucopyranoside 3-phosphate in the mycothiol biosynthesis pathway. This is D-inositol 3-phosphate glycosyltransferase from Paenarthrobacter aurescens (strain TC1).